Reading from the N-terminus, the 264-residue chain is GATA transcription factor 2 (264 aa).

Positions 29 to 42 (SSSGGSTAATSSSS) are enriched in low complexity. Disordered regions lie at residues 29–57 (SSSG…HHLP) and 96–192 (NPLG…TPQW). The span at 101-110 (TMTSVKTETS) shows a compositional bias: polar residues. The Nuclear localization signal signature appears at 114 to 121 (KPRSKRSR). Residues 155-164 (SGGGGGGGGR) show a composition bias toward gly residues. Residues 175-229 (GGGMRRCTHCASEKTPQWRTGPLGPKTLCNACGVRFKSGRLVPEYRPASSPTFVL) form a GATA-type zinc finger.

It belongs to the type IV zinc-finger family. Class A subfamily. In terms of tissue distribution, mostly expressed in roots. Also expressed in flowers and leaves, and to a lower extent in stems.

The protein resides in the nucleus. Transcriptional activator that specifically binds 5'-GATA-3' or 5'-GAT-3' motifs within gene promoters. May be involved in the regulation of some light-responsive genes. This chain is GATA transcription factor 2 (GATA2), found in Arabidopsis thaliana (Mouse-ear cress).